Reading from the N-terminus, the 1203-residue chain is MKVTVCFGRTGIVVPCKDGQLRVRELTQQALQRYLKTRDQDPGYWVKIHHLEYTDGGILDPDDVLADVVEDKDKLIAVFDEQEPLQKTESPGGNPADRQSPDAFETEVAAQLAAFKPVGGEIVVTPSALKLGTPLLVRRSSDPAPGPHADAQPSTASLSGQSLKPVVLDSTQNVENKEAMNGEQAGLLSLHRPKDELSDMTRAVEISGEGDPLGIHVVPFFSSLSGRILGLFIRGIEENSRCKQEGLFQENECIVKINNVELLDKTFAQAQDVFRQAMKSPSVILHVLLPQNREQYEKSVIGPLNIFGNNDGASRTKAAPPARGKPGLKAVHLTRASSPEGEEPASPQQSKSPRVPRLGRKPSSPSLSPLMGFGSKKNAKKIKIDLKKGPEGLGFTVVTRDSSIHGPGPIFVKNILPKGAAVKDGRLQSGDRILEVNGRDVTGRTQEELVAMLRSTKQGETVSLVIARQEGSFLPRELKGEPDCYALSLESSEQLTLEIPLNDSGSAGLGVSLKGNKSRETGTDLGIFIKSIIHGGAAFKDGRLRMNDQLIAVNGETLLGKSNHEAMETLRRSMSMEGNIRGMIQLVILRRPERPLEELSECGALSRPGFENCQEALSTSRRNDSSILYPFGTYSPQDKRKDLLLPSDGWAENEVPPSPPPHPALEWGLEDFSHSSGVDSTGYFPDQHVNFRTVTPVRQPELINLKASKSMDLVPDEGKVQSLADRRSDSPGKDFGPTLGLKKSSSLESLQTAVAEVRKNDLPFHRPRPHMVRGRGCNESFRAAIDKSYDGPEEADADGLSDKSSRSGHTALNCESAPQGNPELDNVENKAKNIKKTKEKEKKKGKGKLKVKEKKLKEEHEDAERKMKRKGFGAMLRFGKKKDDKVGKAEQKGAQKSGHPEEEELERMKEERERIGAKHQELREKQARGLVDYATAVTGPVHDMDDDEMDPNYARVNHFREPCASANVFRSPSPLRAGPLAYPRDGRPLSPDHLEGLYAKVNKPYHPPALADSGRPMAGTTDRIQKLRKEYYQARREGFLLYEDENTRARPSDHDLRWVSGKGPDGSTHNLRFEGMERQYASLPRGGSADPVDYLTASPRGRYNDRELPYYPGPHPVHAPRGSYPRPPDLRATDLRYPQYYPPPPAHQHKGPFRQDVPPSPPQHQRVPVYQEMGRAGPRGSSPDQYPYRNQDPRQKNPMTAAV.

2 disordered regions span residues 79 to 104 and 138 to 162; these read FDEQ…PDAF and RRSS…SGQS. Phosphoserine is present on Ser-100. The segment covering 152 to 162 has biased composition (polar residues); it reads QPSTASLSGQS. Residues 201-289 enclose the PDZ 1 domain; it reads TRAVEISGEG…SPSVILHVLL (89 aa). Positions 334-374 are disordered; that stretch reads TRASSPEGEEPASPQQSKSPRVPRLGRKPSSPSLSPLMGFG. Residues Ser-346, Ser-352, and Ser-368 each carry the phosphoserine modification. 2 consecutive PDZ domains span residues 383 to 468 and 496 to 585; these read KIDL…VIAR and TLEI…GMIQ. Residues Ser-635, Ser-710, Ser-728, Ser-730, Ser-746, Ser-749, and Ser-801 each carry the phosphoserine modification. Positions 718–732 are enriched in basic and acidic residues; sequence GKVQSLADRRSDSPG. The interval 718 to 743 is disordered; that stretch reads GKVQSLADRRSDSPGKDFGPTLGLKK. 3 disordered regions span residues 787–927, 968–994, and 1050–1203; these read KSYD…EKQA, VFRS…PDHL, and RPSD…TAAV. Residue Thr-810 is modified to Phosphothreonine. Residues 827-842 show a composition bias toward basic and acidic residues; that stretch reads VENKAKNIKKTKEKEK. Residues 843–854 show a composition bias toward basic residues; sequence KKGKGKLKVKEK. 4 stretches are compositionally biased toward basic and acidic residues: residues 855–865, 881–893, 906–927, and 984–994; these read KLKEEHEDAER, KKDD…EQKG, ERMK…EKQA, and RDGRPLSPDHL. Residues Ser-1088 and Ser-1182 each carry the phosphoserine modification.

The protein belongs to the PAR3 family. Interacts with PARD6B. Interacts with INSC/inscuteable.

It localises to the endomembrane system. Its subcellular location is the cell junction. The protein localises to the tight junction. Its function is as follows. Putative adapter protein involved in asymmetrical cell division and cell polarization processes. May play a role in the formation of epithelial tight junctions. The chain is Partitioning defective 3 homolog B (Pard3b) from Mus musculus (Mouse).